Here is a 741-residue protein sequence, read N- to C-terminus: uncharacterized protein (741 aa).

Positions 1–22 are cleaved as a signal peptide; that stretch reads MKSVKIIIILALALLIQISHIA.

This is an uncharacterized protein from Archaeoglobus fulgidus (strain ATCC 49558 / DSM 4304 / JCM 9628 / NBRC 100126 / VC-16).